Consider the following 311-residue polypeptide: Protoheme IX farnesyltransferase (311 aa).

8 helical membrane passes run 19–39 (VLAY…VATI), 55–75 (ILAT…LNCV), 101–121 (NAFV…WWQA), 123–143 (LLSG…YTLG), 169–189 (AVTG…FFWT), 221–241 (VTKQ…ALVP), 242–262 (ATGV…LLMA), and 290–310 (VVFC…GSFF).

This sequence belongs to the UbiA prenyltransferase family. Protoheme IX farnesyltransferase subfamily.

It is found in the cell membrane. The catalysed reaction is heme b + (2E,6E)-farnesyl diphosphate + H2O = Fe(II)-heme o + diphosphate. It functions in the pathway porphyrin-containing compound metabolism; heme O biosynthesis; heme O from protoheme: step 1/1. Functionally, converts heme B (protoheme IX) to heme O by substitution of the vinyl group on carbon 2 of heme B porphyrin ring with a hydroxyethyl farnesyl side group. This is Protoheme IX farnesyltransferase from Nocardia farcinica (strain IFM 10152).